Here is a 375-residue protein sequence, read N- to C-terminus: Chaperone protein DnaJ (375 aa).

In terms of domain architecture, J spans 5-70 (DFYEVLGVEK…QKRAQYDQFG (66 aa)). The segment at 134-216 (GVEKEVSITK…CKGKGTVRKQ (83 aa)) adopts a CR-type zinc-finger fold. Residues cysteine 147, cysteine 150, cysteine 164, cysteine 167, cysteine 190, cysteine 193, cysteine 204, and cysteine 207 each contribute to the Zn(2+) site. CXXCXGXG motif repeat units follow at residues 147–154 (CETCTGTG), 164–171 (CPKCNGSG), 190–197 (CDMCGGKG), and 204–211 (CSDCKGKG).

The protein belongs to the DnaJ family. As to quaternary structure, homodimer. Zn(2+) serves as cofactor.

The protein localises to the cytoplasm. Its function is as follows. Participates actively in the response to hyperosmotic and heat shock by preventing the aggregation of stress-denatured proteins and by disaggregating proteins, also in an autonomous, DnaK-independent fashion. Unfolded proteins bind initially to DnaJ; upon interaction with the DnaJ-bound protein, DnaK hydrolyzes its bound ATP, resulting in the formation of a stable complex. GrpE releases ADP from DnaK; ATP binding to DnaK triggers the release of the substrate protein, thus completing the reaction cycle. Several rounds of ATP-dependent interactions between DnaJ, DnaK and GrpE are required for fully efficient folding. Also involved, together with DnaK and GrpE, in the DNA replication of plasmids through activation of initiation proteins. This is Chaperone protein DnaJ from Clostridium tetani (strain Massachusetts / E88).